Consider the following 311-residue polypeptide: Aspartate carbamoyltransferase catalytic subunit (311 aa).

Carbamoyl phosphate is bound by residues Arg55 and Thr56. Lys85 serves as a coordination point for L-aspartate. Arg106, His135, and Gln138 together coordinate carbamoyl phosphate. 2 residues coordinate L-aspartate: Arg168 and Arg230. Residues Leu268 and Pro269 each contribute to the carbamoyl phosphate site.

The protein belongs to the aspartate/ornithine carbamoyltransferase superfamily. ATCase family. In terms of assembly, heterododecamer (2C3:3R2) of six catalytic PyrB chains organized as two trimers (C3), and six regulatory PyrI chains organized as three dimers (R2).

The enzyme catalyses carbamoyl phosphate + L-aspartate = N-carbamoyl-L-aspartate + phosphate + H(+). It participates in pyrimidine metabolism; UMP biosynthesis via de novo pathway; (S)-dihydroorotate from bicarbonate: step 2/3. Functionally, catalyzes the condensation of carbamoyl phosphate and aspartate to form carbamoyl aspartate and inorganic phosphate, the committed step in the de novo pyrimidine nucleotide biosynthesis pathway. The sequence is that of Aspartate carbamoyltransferase catalytic subunit from Pectobacterium carotovorum subsp. carotovorum (strain PC1).